The primary structure comprises 247 residues: Carboxy-S-adenosyl-L-methionine synthase (247 aa).

Residues Tyr39, 64–66, 89–90, 117–118, Asn132, and Arg199 each bind S-adenosyl-L-methionine; these read GCS, DN, and DI.

This sequence belongs to the class I-like SAM-binding methyltransferase superfamily. Cx-SAM synthase family. In terms of assembly, homodimer.

The catalysed reaction is prephenate + S-adenosyl-L-methionine = carboxy-S-adenosyl-L-methionine + 3-phenylpyruvate + H2O. In terms of biological role, catalyzes the conversion of S-adenosyl-L-methionine (SAM) to carboxy-S-adenosyl-L-methionine (Cx-SAM). This is Carboxy-S-adenosyl-L-methionine synthase from Shigella boydii serotype 4 (strain Sb227).